Here is a 115-residue protein sequence, read N- to C-terminus: Meiotically up-regulated gene 168 protein (115 aa).

The interval 82–115 (SVSPVHTKAEEPGLGLTPMNSADFSNKIASRYRS) is disordered. Residues 99-109 (PMNSADFSNKI) are compositionally biased toward polar residues.

The protein resides in the nucleus. In terms of biological role, has a role in meiosis. This chain is Meiotically up-regulated gene 168 protein (mug168), found in Schizosaccharomyces pombe (strain 972 / ATCC 24843) (Fission yeast).